A 127-amino-acid polypeptide reads, in one-letter code: Large ribosomal subunit protein bL20 (127 aa).

Belongs to the bacterial ribosomal protein bL20 family.

Functionally, binds directly to 23S ribosomal RNA and is necessary for the in vitro assembly process of the 50S ribosomal subunit. It is not involved in the protein synthesizing functions of that subunit. In Streptomyces avermitilis (strain ATCC 31267 / DSM 46492 / JCM 5070 / NBRC 14893 / NCIMB 12804 / NRRL 8165 / MA-4680), this protein is Large ribosomal subunit protein bL20.